The primary structure comprises 1372 residues: DNA-directed RNA polymerase subunit beta' (1372 aa).

Zn(2+) is bound by residues Cys69, Cys71, Cys84, and Cys87. The Mg(2+) site is built by Asp460, Asp462, and Asp464. Zn(2+) contacts are provided by Cys808, Cys882, Cys889, and Cys892.

It belongs to the RNA polymerase beta' chain family. In terms of assembly, the RNAP catalytic core consists of 2 alpha, 1 beta, 1 beta' and 1 omega subunit. When a sigma factor is associated with the core the holoenzyme is formed, which can initiate transcription. Requires Mg(2+) as cofactor. The cofactor is Zn(2+).

It catalyses the reaction RNA(n) + a ribonucleoside 5'-triphosphate = RNA(n+1) + diphosphate. In terms of biological role, DNA-dependent RNA polymerase catalyzes the transcription of DNA into RNA using the four ribonucleoside triphosphates as substrates. The chain is DNA-directed RNA polymerase subunit beta' from Rickettsia conorii (strain ATCC VR-613 / Malish 7).